A 417-amino-acid polypeptide reads, in one-letter code: MEPFDPAELPELLKLYYRRLFPYAQYYRWLNYGGVTKNYFQHREFSFTLKDDIYIRYQSFNNQSELEKEMQKMNPYKIDIGAVYSHRPNQHNTVKLGAFQAQEKELVFDIDMTDYDDVRRCCSSADICSKCWTLMTMAMRIIDRALKEDFGFKHRLWVYSGRRGVHCWVCDESVRKLSSAVRSGIVEYLSLVKGGQDVKKKVHLNEKVHPFVRKSINIIKKYFEEYALVGQDILENKENWDKILALVPETIHDELQRGFQKFHSSPQRWEHLRKVANSSQNMKNDKCGPWLEWEVMLQYCFPRLDVNVSKGVNHLLKSPFSVHPKTGRISVPIDFHKVDQFDPFTVPTISAICRELDMVSTHEKEKEENEADSKHRVRGYKKTSLAPYVKVFEQFLENLDKSRKGELLKKSDLQKDF.

Methionine 1 carries the N-acetylmethionine modification. Active-site residues include glutamate 44, aspartate 109, and aspartate 111. Residues aspartate 109 and aspartate 111 each contribute to the Mg(2+) site. Positions 109 and 111 each coordinate Mn(2+). An a ribonucleoside 5'-triphosphate-binding site is contributed by 109-111 (DID). Positions 121, 122, 128, and 131 each coordinate Zn(2+). A Zinc knuckle motif motif is present at residues 121 to 131 (CCSSADICSKC). Residue 160–166 (SGRRGVH) coordinates a ribonucleoside 5'-triphosphate. Residue aspartate 305 coordinates Mg(2+). Position 305 (aspartate 305) interacts with Mn(2+). A ribonucleoside 5'-triphosphate-binding positions include 314 to 317 (HLLK) and histidine 323.

The protein belongs to the eukaryotic-type primase small subunit family. As to quaternary structure, heterodimer of a catalytic subunit PRIM1 and a regulatory subunit PRIM2, also known as the DNA primase complex. Interacts with PRIM2/p58 (via C-terminus). Component of the alpha DNA polymerase complex (also known as the alpha DNA polymerase-primase complex) consisting of four subunits: the catalytic subunit POLA1, the regulatory subunit POLA2, and the primase complex subunits PRIM1 and PRIM2 respectively. Within the complex, POLA1 directly interacts with PRIM2. Mg(2+) serves as cofactor. The cofactor is Mn(2+).

The catalysed reaction is ssDNA + n NTP = ssDNA/pppN(pN)n-1 hybrid + (n-1) diphosphate.. With respect to regulation, the presence of the regulatory subunit PRIM2/p58 accelerates the kinetics of initiation and primer extension. Its function is as follows. Catalytic subunit of the DNA primase complex and component of the DNA polymerase alpha complex (also known as the alpha DNA polymerase-primase complex) which play an essential role in the initiation of DNA synthesis. During the S phase of the cell cycle, the DNA polymerase alpha complex (composed of a catalytic subunit POLA1, an accessory subunit POLA2 and two primase subunits, the catalytic subunit PRIM1 and the regulatory subunit PRIM2) is recruited to DNA at the replicative forks via direct interactions with MCM10 and WDHD1. The primase subunit of the polymerase alpha complex initiates DNA synthesis by oligomerising short RNA primers on both leading and lagging strands. These primers are initially extended by the polymerase alpha catalytic subunit and subsequently transferred to polymerase delta and polymerase epsilon for processive synthesis on the lagging and leading strand, respectively. In the primase complex, both subunits are necessary for the initial di-nucleotide formation, but the extension of the primer depends only on the catalytic subunit. Can add both ribo- and deoxynucleotides during elongation of the primers. Synthesizes 9-mer RNA primers (also known as the 'unit length' RNA primers). Incorporates only ribonucleotides in the presence of ribo- and deoxy-nucleotide triphosphates (rNTPs, dNTPs). Requires template thymine or cytidine to start the RNA primer synthesis, with an adenine or guanine at its 5'-end. Binds single stranded DNA. The chain is DNA primase small subunit (Prim1) from Mus musculus (Mouse).